Reading from the N-terminus, the 503-residue chain is Maturase K (503 aa).

It belongs to the intron maturase 2 family. MatK subfamily.

The protein localises to the plastid. It localises to the chloroplast. In terms of biological role, usually encoded in the trnK tRNA gene intron. Probably assists in splicing its own and other chloroplast group II introns. The sequence is that of Maturase K from Eucalyptus globulus (Tasmanian blue gum).